The primary structure comprises 358 residues: CCAAT/enhancer-binding protein alpha (358 aa).

A disordered region spans residues 1–55 (MESADFYEAEPRPPMSSHLQSPPHAPSNAAFGFPRGAGPAPPPAPPAAPEPLGGI). A required to repress E2F1:TFDP1-mediated transcription, to inhibit cell cycle and to induce adipocyte differentiation region spans residues 1 to 70 (MESADFYEAE…SIDISAYIDP (70 aa)). The span at 29 to 38 (AAFGFPRGAG) shows a compositional bias: low complexity. The span at 39–49 (PAPPPAPPAAP) shows a compositional bias: pro residues. Residues 54–72 (GICEHETSIDISAYIDPAA) are required for interaction with TRIB1. A required to induce adipocyte differentiation region spans residues 126 to 200 (PPGYGCAAAG…HASPAHLAAP (75 aa)). K159 is modified (N6-acetyllysine; alternate). K159 participates in a covalent cross-link: Glycyl lysine isopeptide (Lys-Gly) (interchain with G-Cter in SUMO); alternate. A Glycyl lysine isopeptide (Lys-Gly) (interchain with G-Cter in SUMO2); alternate cross-link involves residue K159. 2 disordered regions span residues 176 to 195 (LFPYQPPPPPPPPHPHASPA) and 213 to 310 (TMHL…NVET). A compositionally biased stretch (pro residues) spans 179–191 (YQPPPPPPPPHPH). A required to functionally cooperate with SREBF1 in promoter activation region spans residues 180-194 (QPPPPPPPPHPHASP). Position 193 is a phosphoserine (S193). The span at 220-234 (HPTPPPTPVPSPHPA) shows a compositional bias: pro residues. Phosphothreonine; by GSK3 occurs at positions 222 and 226. A Phosphoserine; by GSK3 modification is found at S230. Positions 240–358 (AGLPGPGGSL…SLVKAMGNCA (119 aa)) are interaction with FOXO1. A compositionally biased stretch (gly residues) spans 261 to 271 (TGGGGGGGAGA). A compositionally biased stretch (basic and acidic residues) spans 276–292 (KSVDKNSNEYRVRRERN). Residues 282-345 (SNEYRVRRER…DTLRGIFRQL (64 aa)) enclose the bZIP domain. The DNA-binding element occupies 285–300 (YRVRRERNNIAVRKSR). The interval 286–313 (RVRRERNNIAVRKSRDKAKQRNVETQQK) is basic motif. The interval 317 to 345 (LTSDNDRLRKRVEQLSRELDTLRGIFRQL) is leucine-zipper.

It belongs to the bZIP family. C/EBP subfamily. As to quaternary structure, binds DNA as a homodimer and as a heterodimer. Can form stable heterodimers with CEBPB, CEBPD, CEBPE and CEBPG. Can form stable homodimers (also isoform 2 and isoform 3 dimers) and heterodimers with CEBPB (with isoform 2 and isoform 3) and CEBPG. Interacts with PRDM16. Interacts with UBN1. Interacts with ZNF638; this interaction increases transcriptional activation. Interacts with the complex TFDP2:E2F1; the interaction prevents CEBPA binding to target gene promoters and represses its transcriptional activity. Interacts with RB1. Interacts (when phosphorylated at Ser-193) with CDK2, CDK4, E2F4 and SMARCA2. Interacts with SREBPF1. Interacts with FOXO1 (via the Fork-head domain); the interaction increases when FOXO1 is deacetylated. Interacts with SIX1. Interacts (via recognition sequence) with TRIB1. Interacts with TAF1A and UBTF. In terms of assembly, interacts with NPM1. Sumoylated, sumoylation blocks the inhibitory effect on cell proliferation by disrupting the interaction with SMARCA2. In terms of processing, phosphorylation at Ser-193 is required for interaction with CDK2, CDK4 and SWI/SNF complex leading to cell cycle inhibition. Dephosphorylated at Ser-193 by protein phosphatase 2A (PP2A) through PI3K/AKT signaling pathway regulation. Phosphorylation at Thr-222 and Thr-226 by GSK3 is constitutive in adipose tissue and lung. In liver, both Thr-222 and Thr-226 are phosphorylated only during feeding but not during fasting. Phosphorylation of the GSK3 consensus sites selectively decreases transactivation activity on IRE-controlled promoters. Post-translationally, ubiquitinated by COP1 upon interaction with TRIB1. Isoform 2 and isoform 3 are expressed in liver (at protein level).

The protein localises to the nucleus. The protein resides in the nucleolus. Transcription factor that coordinates proliferation arrest and the differentiation of myeloid progenitors, adipocytes, hepatocytes, and cells of the lung and the placenta. Binds directly to the consensus DNA sequence 5'-T[TG]NNGNAA[TG]-3' acting as an activator on distinct target genes. During early embryogenesis, plays essential and redundant functions with CEBPB. Essential for the transition from common myeloid progenitors (CMP) to granulocyte/monocyte progenitors (GMP). Critical for the proper development of the liver and the lung. Necessary for terminal adipocyte differentiation, is required for postnatal maintenance of systemic energy homeostasis and lipid storage. To regulate these different processes at the proper moment and tissue, interplays with other transcription factors and modulators. Down-regulates the expression of genes that maintain cells in an undifferentiated and proliferative state through E2F1 repression, which is critical for its ability to induce adipocyte and granulocyte terminal differentiation. Reciprocally E2F1 blocks adipocyte differentiation by binding to specific promoters and repressing CEBPA binding to its target gene promoters. Proliferation arrest also depends on a functional binding to SWI/SNF complex. In liver, regulates gluconeogenesis and lipogenesis through different mechanisms. To regulate gluconeogenesis, functionally cooperates with FOXO1 binding to IRE-controlled promoters and regulating the expression of target genes such as PCK1 or G6PC1. To modulate lipogenesis, interacts and transcriptionally synergizes with SREBF1 in promoter activation of specific lipogenic target genes such as ACAS2. In adipose tissue, seems to act as FOXO1 coactivator accessing to ADIPOQ promoter through FOXO1 binding sites. Its function is as follows. Can act as dominant-negative. Binds DNA and have transctivation activity, even if much less efficiently than isoform 2. Does not inhibit cell proliferation. Functionally, directly and specifically enhances ribosomal DNA transcription interacting with RNA polymerase I-specific cofactors and inducing histone acetylation. The protein is CCAAT/enhancer-binding protein alpha of Rattus norvegicus (Rat).